The following is a 309-amino-acid chain: Ribosomal RNA small subunit methyltransferase H (309 aa).

S-adenosyl-L-methionine contacts are provided by residues 33 to 35 (GGH), Asp-53, Phe-79, Asp-100, and Gln-107.

This sequence belongs to the methyltransferase superfamily. RsmH family.

Its subcellular location is the cytoplasm. It carries out the reaction cytidine(1402) in 16S rRNA + S-adenosyl-L-methionine = N(4)-methylcytidine(1402) in 16S rRNA + S-adenosyl-L-homocysteine + H(+). Specifically methylates the N4 position of cytidine in position 1402 (C1402) of 16S rRNA. The polypeptide is Ribosomal RNA small subunit methyltransferase H (Clostridium botulinum (strain Langeland / NCTC 10281 / Type F)).